The following is a 446-amino-acid chain: Alkylglycerol monooxygenase (446 aa).

The next 2 membrane-spanning stretches (helical) occupy residues 39–59 (VNQATPYFIGLILLEIVLGWL) and 103–123 (FHFLELPWDSAWTWWLAFLGV). In terms of domain architecture, Fatty acid hydroxylase spans 117-248 (WLAFLGVDMG…LIIWDRMFGT (132 aa)). Residues 131–135 (HRFAH) carry the Histidine box-1 motif. A Histidine box-2 motif is present at residues 144–148 (HQVHH). A helical membrane pass occupies residues 167 to 187 (FSSWIFYSPLALLIPPSVFAV). A Histidine box-3 motif is present at residues 220 to 224 (HRVHH). Transmembrane regions (helical) follow at residues 329-349 (AWSPVMQAYVILQFFLLLDVY), 362-382 (LTVILLTAYVLLSLTSLGFLI), and 410-430 (PLLPALAFPMEAFILISTIYW).

It belongs to the sterol desaturase family. TMEM195 subfamily. Fe cation serves as cofactor.

The protein localises to the endoplasmic reticulum membrane. It catalyses the reaction 1-O-(1,2-saturated-alkyl)-sn-glycerol + (6R)-L-erythro-5,6,7,8-tetrahydrobiopterin + O2 = a 1-(1-hydroxyalkyl)-sn-glycerol + (6R)-L-erythro-6,7-dihydrobiopterin + H2O. Its function is as follows. Glyceryl-ether monooxygenase that cleaves the O-alkyl bond of ether lipids. Ether lipids are essential components of brain membranes. The polypeptide is Alkylglycerol monooxygenase (agmo) (Danio rerio (Zebrafish)).